The chain runs to 155 residues: Peptide methionine sulfoxide reductase MsrB (155 aa).

Positions 15-137 constitute a MsrB domain; the sequence is REALIATLNA…NSVSLTFIPT (123 aa). Residues cysteine 54, cysteine 57, cysteine 103, and cysteine 106 each coordinate Zn(2+). The Nucleophile role is filled by cysteine 126.

The protein belongs to the MsrB Met sulfoxide reductase family. Zn(2+) serves as cofactor.

It carries out the reaction L-methionyl-[protein] + [thioredoxin]-disulfide + H2O = L-methionyl-(R)-S-oxide-[protein] + [thioredoxin]-dithiol. The sequence is that of Peptide methionine sulfoxide reductase MsrB from Xylella fastidiosa (strain 9a5c).